The chain runs to 438 residues: Thymidine phosphorylase (438 aa).

Belongs to the thymidine/pyrimidine-nucleoside phosphorylase family. In terms of assembly, homodimer.

The catalysed reaction is thymidine + phosphate = 2-deoxy-alpha-D-ribose 1-phosphate + thymine. Its pathway is pyrimidine metabolism; dTMP biosynthesis via salvage pathway; dTMP from thymine: step 1/2. Its function is as follows. The enzymes which catalyze the reversible phosphorolysis of pyrimidine nucleosides are involved in the degradation of these compounds and in their utilization as carbon and energy sources, or in the rescue of pyrimidine bases for nucleotide synthesis. The sequence is that of Thymidine phosphorylase from Burkholderia cenocepacia (strain ATCC BAA-245 / DSM 16553 / LMG 16656 / NCTC 13227 / J2315 / CF5610) (Burkholderia cepacia (strain J2315)).